Here is a 719-residue protein sequence, read N- to C-terminus: Probable phosphatidylinositol phosphate kinase DDB_G0267588 (719 aa).

The tract at residues 47–261 (VFSPIPPPPS…SDSPNRVRLN (215 aa)) is disordered. Composition is skewed to low complexity over residues 57–77 (TTDN…TDNT) and 87–104 (IENN…PNSI). Positions 107-129 (ANKKDSIELEEDKEHSIKRKDGS) are enriched in basic and acidic residues. Residues 172-184 (FDATNDNHNPQEV) are compositionally biased toward polar residues. The segment covering 199-217 (TTTTTTTTTTTTSTNSTSN) has biased composition (low complexity). Composition is skewed to polar residues over residues 218-228 (KLPNNGDNTVS) and 248-261 (ASGS…VRLN). Thr-262 carries the post-translational modification Phosphothreonine. The PIPK domain occupies 316-718 (NAVGKSMGTE…RFQEFLSTII (403 aa)). A disordered region spans residues 579–638 (RENEPPSPSLLRSTLEDSSDFESPSMEQSSAGQQQQQRGSGNYDNSGAGRDSTTGGAAPK). The segment covering 606–619 (QSSAGQQQQQRGSG) has biased composition (low complexity).

In terms of processing, phosphorylated at Thr-262 by pkgB.

In terms of biological role, may be involved in signaling events that underlie chemotaxis via the chemoattractant-mediated pkgB phosphorylation. This is Probable phosphatidylinositol phosphate kinase DDB_G0267588 from Dictyostelium discoideum (Social amoeba).